The following is an 87-amino-acid chain: Phosphoribosyl-ATP pyrophosphatase (87 aa).

Belongs to the PRA-PH family.

Its subcellular location is the cytoplasm. It carries out the reaction 1-(5-phospho-beta-D-ribosyl)-ATP + H2O = 1-(5-phospho-beta-D-ribosyl)-5'-AMP + diphosphate + H(+). It functions in the pathway amino-acid biosynthesis; L-histidine biosynthesis; L-histidine from 5-phospho-alpha-D-ribose 1-diphosphate: step 2/9. This is Phosphoribosyl-ATP pyrophosphatase from Thermobifida fusca (strain YX).